The chain runs to 479 residues: Ribosomal RNA small subunit methyltransferase F (479 aa).

Residues 125–131 (AAAPGSK), Glu149, Asp176, and Asp194 each bind S-adenosyl-L-methionine. Catalysis depends on Cys247, which acts as the Nucleophile.

This sequence belongs to the class I-like SAM-binding methyltransferase superfamily. RsmB/NOP family.

The protein resides in the cytoplasm. It catalyses the reaction cytidine(1407) in 16S rRNA + S-adenosyl-L-methionine = 5-methylcytidine(1407) in 16S rRNA + S-adenosyl-L-homocysteine + H(+). In terms of biological role, specifically methylates the cytosine at position 1407 (m5C1407) of 16S rRNA. This is Ribosomal RNA small subunit methyltransferase F from Salmonella typhi.